A 259-amino-acid polypeptide reads, in one-letter code: Submandibular glandular kallikrein-9 (259 aa).

Residues 1–18 (MWFLILFLALSLGQIDAA) form the signal peptide. The propeptide at 19 to 24 (PPGQSR) is activation peptide. Residues 25–256 (VVGGYNCETN…FTSWIKKVMK (232 aa)) form the Peptidase S1 domain. 5 disulfides stabilise this stretch: Cys-31–Cys-171, Cys-48–Cys-64, Cys-150–Cys-217, Cys-182–Cys-196, and Cys-207–Cys-232. The active-site Charge relay system is His-63. An N-linked (GlcNAc...) asparagine glycan is attached at Asn-106. Asp-118 (charge relay system) is an active-site residue. Catalysis depends on Ser-211, which acts as the Charge relay system.

The protein belongs to the peptidase S1 family. Kallikrein subfamily. As to quaternary structure, heterodimer of a light chain and heavy chain linked by a disulfide bond.

It catalyses the reaction Preferential cleavage of Arg-|-Xaa bonds in small molecule substrates. Highly selective action to release kallidin (lysyl-bradykinin) from kininogen involves hydrolysis of Met-|-Xaa or Leu-|-Xaa.. Glandular kallikreins cleave Met-Lys and Arg-Ser bonds in kininogen to release Lys-bradykinin. This enzyme has a vasoconstrictor activity. KLK-9 has both a chymotrypsin-like and a trypsin-like properties. This Rattus norvegicus (Rat) protein is Submandibular glandular kallikrein-9 (Klk9).